Here is a 251-residue protein sequence, read N- to C-terminus: 5-oxoprolinase subunit A 2 (251 aa).

Belongs to the LamB/PxpA family. As to quaternary structure, forms a complex composed of PxpA, PxpB and PxpC.

It catalyses the reaction 5-oxo-L-proline + ATP + 2 H2O = L-glutamate + ADP + phosphate + H(+). Functionally, catalyzes the cleavage of 5-oxoproline to form L-glutamate coupled to the hydrolysis of ATP to ADP and inorganic phosphate. The polypeptide is 5-oxoprolinase subunit A 2 (Pseudomonas syringae pv. tomato (strain ATCC BAA-871 / DC3000)).